The sequence spans 307 residues: Glutaminase (307 aa).

7 residues coordinate substrate: Ser66, Asn117, Glu161, Asn168, Tyr192, Tyr243, and Val261.

It belongs to the glutaminase family. In terms of assembly, homotetramer.

The catalysed reaction is L-glutamine + H2O = L-glutamate + NH4(+). The protein is Glutaminase of Serratia proteamaculans (strain 568).